Here is a 464-residue protein sequence, read N- to C-terminus: tRNA modification GTPase MnmE (464 aa).

Residues R25, E87, and K130 each coordinate (6S)-5-formyl-5,6,7,8-tetrahydrofolate. A TrmE-type G domain is found at G226–G386. A K(+)-binding site is contributed by N236. GTP contacts are provided by residues N236–S241, T255–T261, and D280–G283. Residue S240 coordinates Mg(2+). The K(+) site is built by T255, I257, and T260. Mg(2+) is bound at residue T261. Position 464 (K464) interacts with (6S)-5-formyl-5,6,7,8-tetrahydrofolate.

It belongs to the TRAFAC class TrmE-Era-EngA-EngB-Septin-like GTPase superfamily. TrmE GTPase family. Homodimer. Heterotetramer of two MnmE and two MnmG subunits. It depends on K(+) as a cofactor.

The protein localises to the cytoplasm. Its function is as follows. Exhibits a very high intrinsic GTPase hydrolysis rate. Involved in the addition of a carboxymethylaminomethyl (cmnm) group at the wobble position (U34) of certain tRNAs, forming tRNA-cmnm(5)s(2)U34. The sequence is that of tRNA modification GTPase MnmE from Burkholderia orbicola (strain MC0-3).